Consider the following 303-residue polypeptide: MSFTTKVKEELIHLSTGDNNELAAIIKLSGSLGLAHQSLHLSITTENAKIARYIYSLIEDAYVIVPEIRYHQKTNLRKNRVYTVYVEQGVETILADLKLADSFFGLETGIEPQVLSDDNAGRSYLKGAFLAAGSIRDPESGKYQLEIYSVYLDHAQDLAQLMQKFMLDAKTIEHKSGAVTYVQKAEDIMDFLIIIGAMSCKEDFEAIKLLREARNDINRANNAETANIAKTISASMKTINNIIKIMDTIGLESLPIELQQVAQLRVKHPDYSIQQVADALEFPITKSGVNHRLRKINKIADDL.

Residues 272 to 303 (SIQQVADALEFPITKSGVNHRLRKINKIADDL) constitute a DNA-binding region (H-T-H motif).

This sequence belongs to the WhiA family.

Involved in cell division and chromosome segregation. The polypeptide is Probable cell division protein WhiA (Streptococcus pyogenes serotype M12 (strain MGAS2096)).